Reading from the N-terminus, the 397-residue chain is Phosphoglycerate kinase (397 aa).

Substrate is bound by residues 23–25, Arg-38, 61–64, Arg-122, and Arg-155; these read DFN and HMGK. ATP-binding positions include Lys-206, Gly-296, Glu-327, and 353-356; that span reads GGDS.

It belongs to the phosphoglycerate kinase family. Monomer.

The protein localises to the cytoplasm. It catalyses the reaction (2R)-3-phosphoglycerate + ATP = (2R)-3-phospho-glyceroyl phosphate + ADP. Its pathway is carbohydrate degradation; glycolysis; pyruvate from D-glyceraldehyde 3-phosphate: step 2/5. This chain is Phosphoglycerate kinase, found in Clostridium perfringens (strain ATCC 13124 / DSM 756 / JCM 1290 / NCIMB 6125 / NCTC 8237 / Type A).